We begin with the raw amino-acid sequence, 75 residues long: uncharacterized protein (75 aa).

4Fe-4S ferredoxin-type domains are found at residues 2-30 (SHTI…KGEG) and 37-68 (DWYW…KEEP). The [3Fe-4S] cluster site is built by Cys10 and Cys16. [4Fe-4S] cluster-binding residues include Cys20, Cys46, Cys49, and Cys52. Cys56 contacts [3Fe-4S] cluster.

It depends on [4Fe-4S] cluster as a cofactor. [3Fe-4S] cluster is required as a cofactor.

It is found in the plastid. The protein resides in the chloroplast. This is an uncharacterized protein from Porphyra purpurea (Red seaweed).